We begin with the raw amino-acid sequence, 624 residues long: MAEAPQVVEIDPDFEPLPRPRSCTWPLPRPEFSQSNSATSSPAPSGGAAANPDGAAGLPSASAAAVNADFMSNLSLLEESGDFQQAPGSVAAAAPLSQHPPVPPAAAAAAAGGQLAGQPRKSSSSRRNAWGNLSYADLITKAIESSAEKRLTLSQIYEWMVKSVPYFKDKGDSNSSAGWKNSIRHNLSLHSKFIRVQNEGTGKSSWWMLNPEGGKSGKSPRRRAASMDNNSKFAKSRGRAAKKKASLQSGQEGAGDSPGSQFSKWPASPGSHSNDDFDNWSTFRPRTSSNASTISGRLSPIMTEQDDLGDGDVHSMVYPPSAAKMASTLPSLSEISNPENMENLLDNLNLLSSPTSLTVSTQSSPGTMMQQTPCYSFAPPNTSLNSPTPNYQKYTYGQSSMSPLPQMPMQTLQDNKSSYGGMSQYCAPGLLKELLTSDSPPHNDIMTPVDPGVAQANSRVLGQSVLMGPNSVMPAYGGQASHNKMMTPSSHTHPGHAQSTSAVNGRALPHAVNTMPHTSGMNRLAPVKTALQVPLAHPMQMSALGGYSSVSSCNGYGRMGVLHQEKLPSDLDGMFIERLDCDMESIIRNDLMDGDTLDFNFDNVLPNQSFPHSVKTTTHSWVSG.

2 disordered regions span residues 1 to 62 (MAEA…PSAS) and 94 to 128 (APLS…SRRN). Thr-24 is modified (phosphothreonine; by PKB/AKT1 or PKB/AKT2 and SGK1). 2 stretches are compositionally biased toward low complexity: residues 37 to 62 (SATS…PSAS) and 105 to 119 (AAAA…AGQP). Residues 130-224 (WGNLSYADLI…KSGKSPRRRA (95 aa)) constitute a DNA-binding region (fork-head). DNA-binding stretches follow at residues 181–188 (NSIRHNLS) and 204–207 (SSWW). Ser-182 bears the Phosphoserine; by STK4/MST1 mark. 3 positions are modified to phosphoserine: Ser-188, Ser-204, and Ser-205. The segment at 204-306 (SSWWMLNPEG…RLSPIMTEQD (103 aa)) is disordered. 2 positions are modified to N6-acetyllysine: Lys-215 and Lys-218. The residue at position 219 (Ser-219) is a Phosphoserine; by CDK1. Residues Arg-221 and Arg-223 each carry the omega-N-methylarginine; by PRMT1 modification. A Nuclear localization signal motif is present at residues 221–223 (RRR). Ser-226 is modified (phosphoserine; by PKB/AKT1 and SGK1). Lys-232, Lys-235, and Lys-244 each carry N6-acetyllysine. Residues 234–245 (AKSRGRAAKKKA) show a composition bias toward basic residues. The segment at 253-532 (GAGDSPGSQF…RLAPVKTALQ (280 aa)) is sufficient for interaction with NLK. 2 positions are modified to phosphoserine: Ser-257 and Ser-268. Residues 279 to 296 (NWSTFRPRTSSNASTISG) show a composition bias toward polar residues. Phosphoserine; by PKB/AKT1 is present on Ser-289. The residue at position 292 (Ser-292) is a Phosphoserine; by CK1 and SGK1. Ser-295 bears the Phosphoserine; by CK1 mark. Ser-299 carries the post-translational modification Phosphoserine; by DYRK1A. Thr-303 carries the post-translational modification Phosphothreonine. The segment at 333–428 (SEISNPENME…YGGMSQYCAP (96 aa)) is required for interaction with RUNX2. The residue at position 393 (Lys-393) is an N6-acetyllysine. Residues 431 to 435 (LKELL) carry the Required for interaction with SIRT1 motif.

In terms of assembly, interacts with LRPPRC. Interacts with RUNX2; the interaction inhibits RUNX2 transcriptional activity and mediates the IGF1/insulin-dependent BGLAP expression in osteoblasts Interacts with PPP2R1A; the interaction regulates the dephosphorylation of FOXO1 at Thr-24 and Ser-263 leading to its nuclear import. Interacts with NLK. Interacts with SIRT1; the interaction results in the deacetylation of FOXO1 leading to activation of FOXO1-mediated transcription of genes involved in DNA repair and stress resistance. Binds to CDK1. Interacts with the 14-3-3 proteins, YWHAG and YWHAZ; the interactions require insulin-stimulated phosphorylation on Thr-24, promote nuclear exit and loss of transcriptional activity. Interacts with SKP2; the interaction ubiquitinates FOXO1 leading to its proteasomal degradation. The interaction requires the presence of KRIT1. Interacts (via the C-terminal half) with ATF4 (via its DNA binding domain); the interaction occurs in osteoblasts, regulates glucose homeostasis via suppression of beta-cell proliferation and subsequent decrease in insulin production. Interacts with PRMT1; the interaction methylates FOXO1, prevents PKB/AKT1 phosphorylation and retains FOXO1 in the nucleus. Interacts with EP300 and CREBBP; the interactions acetylate FOXO1. Interacts with SIRT2; the interaction is disrupted in response to oxidative stress or serum deprivation, leading to increased level of acetylated FOXO1, which promotes stress-induced autophagy by stimulating E1-like activating enzyme ATG7. Interacts (acetylated form) with ATG7; the interaction is increased in response to oxidative stress or serum deprivation and promotes the autophagic process leading to cell death. Interacts (acetylated form) with PPARG. Interacts with XBP1; this interaction is direct and leads to FOXO1 ubiquitination and degradation via the proteasome pathway. Interacts (via the Fork-head domain) with CEBPA; the interaction increases when FOXO1 is deacetylated. Interacts with WDFY2. Forms a complex with WDFY2 and AKT1. Interacts with CRY1. Interacts with PPIA/CYPA; the interaction promotes FOXO1 dephosphorylation, nuclear accumulation and transcriptional activity. Interacts with TOX4; FOXO1 is required for full induction of TOX4-dependent activity and the interaction is inhibited by insulin. Interacts (when phosphorylated on Ser-226) with STUB1/CHIP. Phosphorylation by NLK promotes nuclear export and inhibits the transcriptional activity. In response to growth factors, phosphorylation on Thr-24, Ser-226 and Ser-292 by PKB/AKT1 promotes nuclear export and inactivation of transactivational activity. Phosphorylation on Thr-24 is required for binding 14-3-3 proteins. Phosphorylation of Ser-226 decreases DNA-binding activity and promotes the phosphorylation of Thr-24 and Ser-289, permitting phosphorylation of Ser-292 and Ser-295, probably by CDK1, leading to nuclear exclusion and loss of function. Stress signals, such as response to oxygen or nitric oxide, attenuate the PKB/AKT1-mediated phosphorylation leading to nuclear retention. Phosphorylation of Ser-299 is independent of IGF1 and leads to reduced function. Dephosphorylated on Thr-24 and Ser-226 by PP2A in beta-cells under oxidative stress leading to nuclear retention. Phosphorylation of Ser-219 by CDK1 disrupts binding of 14-3-3 proteins leading to nuclear accumulation and has no effect on DNA binding nor transcriptional activity. Phosphorylation by STK4/MST1 on Ser-182, upon oxidative stress, inhibits binding to 14-3-3 proteins and nuclear export. PPIA/CYPA promotes its dephosphorylation on Ser-226. In terms of processing, ubiquitinated by SKP2. Ubiquitination leads to proteasomal degradation. Ubiquitinated by STUB1/CHIP; when Ser-226 is phosphorylated. Post-translationally, methylation inhibits AKT1-mediated phosphorylation at Ser-226 and is increased by oxidative stress. Acetylated. Acetylation at Lys-232 and Lys-244 are necessary for autophagic cell death induction. Deacetylated by SIRT2 in response to oxidative stress or serum deprivation, thereby negatively regulating FOXO1-mediated autophagic cell death. Once in the nucleus, acetylated by CREBBP/EP300. Acetylation diminishes the interaction with target DNA and attenuates the transcriptional activity. It increases the phosphorylation at Ser-226. Deacetylation by SIRT1 results in reactivation of the transcriptional activity. Oxidative stress by hydrogen peroxide treatment appears to promote deacetylation and uncoupling of insulin-induced phosphorylation. By contrast, resveratrol acts independently of acetylation. Acetylated at Lys-393, promoting its localization to the nucleus and transcription factor activity. Deacetylation at Lys-393 by SIRT6, promotes its translocation into the cytoplasm, preventing its transcription factor activity. Deacetylation and subsequent inhibition by SIRT6 has different effects depending on cell types: it inhibits gluconeogenesis in hepatocytes, promotes glucose sensing in pancreatic beta-cells and regulates lipid catabolism in brown adipocytes.

It is found in the cytoplasm. It localises to the nucleus. Its function is as follows. Transcription factor that is the main target of insulin signaling and regulates metabolic homeostasis in response to oxidative stress. Binds to the insulin response element (IRE) with consensus sequence 5'-TT[G/A]TTTTG-3' and the related Daf-16 family binding element (DBE) with consensus sequence 5'-TT[G/A]TTTAC-3'. Activity suppressed by insulin. Main regulator of redox balance and osteoblast numbers and controls bone mass. Orchestrates the endocrine function of the skeleton in regulating glucose metabolism. Also acts as a key regulator of chondrogenic commitment of skeletal progenitor cells in response to lipid availability: when lipids levels are low, translocates to the nucleus and promotes expression of SOX9, which induces chondrogenic commitment and suppresses fatty acid oxidation. Acts synergistically with ATF4 to suppress osteocalcin/BGLAP activity, increasing glucose levels and triggering glucose intolerance and insulin insensitivity. Also suppresses the transcriptional activity of RUNX2, an upstream activator of osteocalcin/BGLAP. Acts as an inhibitor of glucose sensing in pancreatic beta cells by acting as a transcription repressor and suppressing expression of PDX1. In hepatocytes, promotes gluconeogenesis by acting together with PPARGC1A and CEBPA to activate the expression of genes such as IGFBP1, G6PC1 and PCK1. Also promotes gluconeogenesis by directly promoting expression of PPARGC1A and G6PC1. Important regulator of cell death acting downstream of CDK1, PKB/AKT1 and STK4/MST1. Promotes neural cell death. Mediates insulin action on adipose tissue. Regulates the expression of adipogenic genes such as PPARG during preadipocyte differentiation and, adipocyte size and adipose tissue-specific gene expression in response to excessive calorie intake. Regulates the transcriptional activity of GADD45A and repair of nitric oxide-damaged DNA in beta-cells. Required for the autophagic cell death induction in response to starvation or oxidative stress in a transcription-independent manner. Mediates the function of MLIP in cardiomyocytes hypertrophy and cardiac remodeling. Positive regulator of apoptosis in cardiac smooth muscle cells as a result of its transcriptional activation of pro-apoptotic genes. Regulates endothelial cell (EC) viability and apoptosis in a PPIA/CYPA-dependent manner via transcription of CCL2 and BCL2L11 which are involved in EC chemotaxis and apoptosis. This chain is Forkhead box protein O1 (FOXO1), found in Bos taurus (Bovine).